A 1785-amino-acid polypeptide reads, in one-letter code: Plexin-2 (1785 aa).

The signal sequence occupies residues 1–17 (MLPESVFLLLISHFLRA). The 427-residue stretch at 18–444 (VTQPPFETEG…MPYGIILEEL (427 aa)) folds into the Sema domain. The Extracellular portion of the chain corresponds to 18–1139 (VTQPPFETEG…SDHALPSRLS (1122 aa)). N-linked (GlcNAc...) asparagine glycosylation occurs at N66. Cystine bridges form between C84-C91, C118-C126, C247-C349, C263-C300, C318-C336, C447-C464, C453-C487, C456-C473, and C467-C479. The N-linked (GlcNAc...) asparagine glycan is linked to N249. One can recognise a PSI 1 domain in the interval 446-488 (TCSHHSSCTECLVSVDPLCQWCHPTQSCTTSARCTSPVTSQCP). N502, N536, and N572 each carry an N-linked (GlcNAc...) asparagine glycan. C524 and C544 are oxidised to a cystine. The 41-residue stretch at 577–617 (DCSGYGTCSSCMSSEYNCAWCSGLHKCSNSCGALEKSKACV) folds into the PSI 2 domain. N679 and N702 each carry an N-linked (GlcNAc...) asparagine glycan. The 42-residue stretch at 707-748 (SCTNLASDCSSCLALSPSLSCGWCNRQCSHECHESKATAVCD) folds into the PSI 3 domain. IPT/TIG domains follow at residues 750–837 (PRID…LYSF), 840–924 (TSIF…PFEY), and 928–1040 (PSIS…LSPF). Residues N864, N886, N984, and N1016 are each glycosylated (N-linked (GlcNAc...) asparagine). Residues 1140–1160 (LLILGLLLFIVVTLTVMCLVF) form a helical membrane-spanning segment. Residues 1159–1197 (VFKRRRQEREKEYRKIQLQMENLENNVRKECKQAFAELQ) adopt a coiled-coil conformation. Over 1161–1785 (KRRRQEREKE…HIYSTISDYE (625 aa)) the chain is Cytoplasmic.

It belongs to the plexin family. As to quaternary structure, interacts with mab-20. In terms of tissue distribution, expressed predominantly in the central nervous system from embryonic to adult stages. Expressed in early embryos in ventral neuroblasts. Expressed in neurons and in a subset of posterior lateral and ventral epidermal cells following epidermal enclosure. Present in neurons, muscles and weakly expressed in epidermal cells of the larval tail.

The protein localises to the cell membrane. Involved as a receptor for mab-20/sema-2a in the formation or stabilization of cell-cell contacts at several stages of epithelial morphogenesis. In early embryonic development, required for proper ventral closure of the epidermis. During male tail morphogenesis, involved in precursor cell sorting and in the formation of distinct sensory rays. Involved in axon guidance of SDQL neurons during neurogenesis. Probably in response to stimulation by mab-20, regulates fln-1-mediated remodeling of the actin cytoskeleton and thus axon guidance and/or fasciculation of DD/VD neurons. This Caenorhabditis elegans protein is Plexin-2.